The following is a 161-amino-acid chain: Epoxidase gkaX (161 aa).

The N-terminal stretch at 1 to 18 (MSLSTSLRLLRLLPAISS) is a signal peptide. N-linked (GlcNAc...) asparagine glycosylation is present at N45. 3 helical membrane-spanning segments follow: residues 59–79 (WQWILIIGYPLNYLFGILNLV), 92–112 (IWYVLGLFFSVGHMLFVKMAL), and 139–159 (WVRALITDLPAWICWIMAAVS).

Belongs to the epoxidase xenD family.

The protein localises to the membrane. The protein operates within mycotoxin biosynthesis. Its function is as follows. Epoxidase; part of the gene cluster that mediates the biosynthesis of GKK1032, fungal natural products containing a macrocyclic para-cyclophane connected to a decahydrofluorene ring system that show potent antitumor activities. Within the pathway, gkaX functions synergistically with gkaB and gkaZ to form the cyclophane. The pathway begins with the PKS-NRPS gkaA which, with the help of the trans-enoyl reductase gkaC, synthesizes the polyketide-tyrosyl acyl thioester product which can be reductively off-loaded by the terminal reductase (R) domain in gkaA. The alpha/beta hydrolase gkaG is then required to catalyze the subsequent Knoevenagel condensation that affords the 3-pyrrolin-2-one ring, whereas the three proteins gkaB, gkaX and gkaZ then function synergistically to form the cyclophane. In Penicillium citrinum, this protein is Epoxidase gkaX.